Here is a 152-residue protein sequence, read N- to C-terminus: Ribosome maturation factor RimP (152 aa).

It belongs to the RimP family.

It is found in the cytoplasm. Functionally, required for maturation of 30S ribosomal subunits. This Paraburkholderia xenovorans (strain LB400) protein is Ribosome maturation factor RimP.